A 422-amino-acid polypeptide reads, in one-letter code: Enolase (422 aa).

Residue glutamine 162 coordinates (2R)-2-phosphoglycerate. The Proton donor role is filled by glutamate 204. Residues aspartate 241, glutamate 284, and aspartate 311 each coordinate Mg(2+). (2R)-2-phosphoglycerate contacts are provided by lysine 336, arginine 365, serine 366, and lysine 387. Lysine 336 functions as the Proton acceptor in the catalytic mechanism.

It belongs to the enolase family. The cofactor is Mg(2+).

The protein resides in the cytoplasm. It localises to the secreted. It is found in the cell surface. It carries out the reaction (2R)-2-phosphoglycerate = phosphoenolpyruvate + H2O. It participates in carbohydrate degradation; glycolysis; pyruvate from D-glyceraldehyde 3-phosphate: step 4/5. Catalyzes the reversible conversion of 2-phosphoglycerate (2-PG) into phosphoenolpyruvate (PEP). It is essential for the degradation of carbohydrates via glycolysis. The polypeptide is Enolase (Bartonella tribocorum (strain CIP 105476 / IBS 506)).